The following is a 558-amino-acid chain: Dihydroxy-acid dehydratase (558 aa).

Residue Cys50 coordinates [2Fe-2S] cluster. Asp82 is a binding site for Mg(2+). Position 123 (Cys123) interacts with [2Fe-2S] cluster. Residues Asp124 and Lys125 each contribute to the Mg(2+) site. At Lys125 the chain carries N6-carboxylysine. Cys195 serves as a coordination point for [2Fe-2S] cluster. Glu447 lines the Mg(2+) pocket. Ser472 acts as the Proton acceptor in catalysis.

This sequence belongs to the IlvD/Edd family. As to quaternary structure, homodimer. Requires [2Fe-2S] cluster as cofactor. The cofactor is Mg(2+).

The catalysed reaction is (2R)-2,3-dihydroxy-3-methylbutanoate = 3-methyl-2-oxobutanoate + H2O. It carries out the reaction (2R,3R)-2,3-dihydroxy-3-methylpentanoate = (S)-3-methyl-2-oxopentanoate + H2O. It participates in amino-acid biosynthesis; L-isoleucine biosynthesis; L-isoleucine from 2-oxobutanoate: step 3/4. Its pathway is amino-acid biosynthesis; L-valine biosynthesis; L-valine from pyruvate: step 3/4. Functions in the biosynthesis of branched-chain amino acids. Catalyzes the dehydration of (2R,3R)-2,3-dihydroxy-3-methylpentanoate (2,3-dihydroxy-3-methylvalerate) into 2-oxo-3-methylpentanoate (2-oxo-3-methylvalerate) and of (2R)-2,3-dihydroxy-3-methylbutanoate (2,3-dihydroxyisovalerate) into 2-oxo-3-methylbutanoate (2-oxoisovalerate), the penultimate precursor to L-isoleucine and L-valine, respectively. The protein is Dihydroxy-acid dehydratase of Saccharolobus islandicus (strain L.S.2.15 / Lassen #1) (Sulfolobus islandicus).